The chain runs to 327 residues: GMP reductase (327 aa).

Cys-175 acts as the Thioimidate intermediate in catalysis. 204–227 (IIADGGIRTPGDIAKSIRFGATMV) is an NADP(+) binding site.

This sequence belongs to the IMPDH/GMPR family. GuaC type 2 subfamily.

It carries out the reaction IMP + NH4(+) + NADP(+) = GMP + NADPH + 2 H(+). Catalyzes the irreversible NADPH-dependent deamination of GMP to IMP. It functions in the conversion of nucleobase, nucleoside and nucleotide derivatives of G to A nucleotides, and in maintaining the intracellular balance of A and G nucleotides. The sequence is that of GMP reductase from Clostridium acetobutylicum (strain ATCC 824 / DSM 792 / JCM 1419 / IAM 19013 / LMG 5710 / NBRC 13948 / NRRL B-527 / VKM B-1787 / 2291 / W).